The chain runs to 258 residues: Ribosomal protein L11 methyltransferase (258 aa).

Residues threonine 117, glycine 138, aspartate 160, and asparagine 201 each contribute to the S-adenosyl-L-methionine site.

This sequence belongs to the methyltransferase superfamily. PrmA family.

It is found in the cytoplasm. It catalyses the reaction L-lysyl-[protein] + 3 S-adenosyl-L-methionine = N(6),N(6),N(6)-trimethyl-L-lysyl-[protein] + 3 S-adenosyl-L-homocysteine + 3 H(+). Its function is as follows. Methylates ribosomal protein L11. The protein is Ribosomal protein L11 methyltransferase of Thermosipho melanesiensis (strain DSM 12029 / CIP 104789 / BI429).